The following is a 352-amino-acid chain: RAD51-associated protein 1 (352 aa).

Over residues 1–10 (MVRPVRHKKP) the composition is skewed to basic residues. 2 disordered regions span residues 1–78 (MVRP…TFSI) and 115–144 (TNVQ…HISN). Phosphoserine is present on residues Ser19 and Ser21. Positions 30–49 (VPLNKKSRTAPKELKQDKPK) are interaction with DNA. The span at 39–72 (APKELKQDKPKPNLNNLRKEEIPVQEKTPKKRLP) shows a compositional bias: basic and acidic residues. Position 66 is a phosphothreonine (Thr66). Phosphoserine is present on residues Ser120 and Ser124. Over residues 132 to 144 (KIETMNKSPHISN) the composition is skewed to polar residues. An SIM motif motif is present at residues 154–159 (LDKITV). The interval 162-323 (DVGGVQGKRK…RSSSSPLVVV (162 aa)) is disordered. Acidic residues predominate over residues 188–221 (SDGDSANDTEPDFAPGEDSEDDSDFCESEDNDED). Residues 229–247 (VKEIKKKEVKVKSPVEKKE) show a composition bias toward basic and acidic residues. An interaction with DNA region spans residues 243-304 (VEKKEKKSKS…PSAESKKPKW (62 aa)). A Glycyl lysine isopeptide (Lys-Gly) (interchain with G-Cter in ubiquitin; alternate) cross-link involves residue Lys251. Lys269 participates in a covalent cross-link: Glycyl lysine isopeptide (Lys-Gly) (interchain with G-Cter in SUMO). Positions 270–284 (SESQSLPKKVSLSSD) are enriched in polar residues. Ser280 is subject to Phosphoserine. Residues 304-307 (WVPP) carry the WVPP motif motif. Positions 306–323 (PPAASGGSRSSSSPLVVV) are enriched in low complexity. Positions 313–352 (SRSSSSPLVVVSVKSPNQSLRLGLSRLARVKPLHPNATST) are interaction with RAD51. A Phosphoserine modification is found at Ser327.

Monomer; elongated monodisperse monomer. Interacts (via C-terminal region) with RAD51; the interaction is direct. Interacts (via SIM motif) with WDR48/UAF1; WDR48/UAF1 and RAD51AP1 cooperate together to stimulate RAD51-mediated homologous recombination (HR). Interacts (via WVPP motif) with DMC1; the interaction is direct. Interacts with PALB2. Interacts with RAD52. In terms of assembly, does not interact with DMC1; lack of interaction is caused by the absence of the WVPP motif in this isoform. In terms of processing, sumoylation with SUMO2/3 by NSMCE2/MMS21 promotes stabilization, possibly by preventing ubiquitination. Sumoylation is required for alternative lengthening of telomeres (ALT) pathway. Highly expressed in testis and thymus. Lower levels in colon and small intestine. Little or no expression in spleen, prostate, ovary and peripheral blood leukocytes.

It localises to the chromosome. It is found in the nucleus. The protein localises to the telomere. In terms of biological role, structure-specific DNA-binding protein involved in DNA repair by promoting RAD51-mediated homologous recombination. Acts by stimulating D-Loop formation by RAD51: specifically enhances joint molecule formation through its structure-specific DNA interaction and its interaction with RAD51. Binds single-stranded DNA (ssDNA), double-stranded DNA (dsDNA) and secondary DNA structures, such as D-loop structures: has a strong preference for branched-DNA structures that are obligatory intermediates during joint molecule formation. Cooperates with WDR48/UAF1 to stimulate RAD51-mediated homologous recombination: both WDR48/UAF1 and RAD51AP1 have coordinated role in DNA-binding during homologous recombination and DNA repair. WDR48/UAF1 and RAD51AP1 also have a coordinated role in DNA-binding to promote USP1-mediated deubiquitination of FANCD2. Also involved in meiosis by promoting DMC1-mediated homologous meiotic recombination. Key mediator of alternative lengthening of telomeres (ALT) pathway, a homology-directed repair mechanism of telomere elongation that controls proliferation in aggressive cancers, by stimulating homologous recombination. May also bind RNA; additional evidences are however required to confirm RNA-binding in vivo. This chain is RAD51-associated protein 1, found in Homo sapiens (Human).